A 321-amino-acid polypeptide reads, in one-letter code: Glucokinase (321 aa).

Residue 8–13 (GDVGGT) participates in ATP binding.

It belongs to the bacterial glucokinase family.

The protein resides in the cytoplasm. It carries out the reaction D-glucose + ATP = D-glucose 6-phosphate + ADP + H(+). This chain is Glucokinase, found in Salmonella arizonae (strain ATCC BAA-731 / CDC346-86 / RSK2980).